The primary structure comprises 318 residues: O-glucosyltransferase LpsA (318 aa).

Belongs to the glycosyltransferase 90 family.

The protein operates within protein modification; protein glycosylation. Its function is as follows. Involved in lipopolysaccharide core biosynthesis. This is O-glucosyltransferase LpsA (lpsA) from Dichelobacter nodosus (Bacteroides nodosus).